A 248-amino-acid chain; its full sequence is 2,3-bisphosphoglycerate-dependent phosphoglycerate mutase (248 aa).

Substrate-binding positions include 8–15 (RHGESAWN), 21–22 (TG), arginine 60, 87–90 (EKHY), lysine 98, 114–115 (RR), and 183–184 (GN). Catalysis depends on histidine 9, which acts as the Tele-phosphohistidine intermediate. Glutamate 87 acts as the Proton donor/acceptor in catalysis.

Belongs to the phosphoglycerate mutase family. BPG-dependent PGAM subfamily.

It catalyses the reaction (2R)-2-phosphoglycerate = (2R)-3-phosphoglycerate. Its pathway is carbohydrate degradation; glycolysis; pyruvate from D-glyceraldehyde 3-phosphate: step 3/5. In terms of biological role, catalyzes the interconversion of 2-phosphoglycerate and 3-phosphoglycerate. In Bacteroides fragilis (strain ATCC 25285 / DSM 2151 / CCUG 4856 / JCM 11019 / LMG 10263 / NCTC 9343 / Onslow / VPI 2553 / EN-2), this protein is 2,3-bisphosphoglycerate-dependent phosphoglycerate mutase.